Here is a 145-residue protein sequence, read N- to C-terminus: MRILVLNGPNLNLLGRREPDVYGDVSLKGLAAELMLRAPEDVELTFKQSNHEGDLIDALHDAFDYEGVILNAGAYTHTSIAIRDAISAIAAPVVEVHISNVHARETFRHESKLAAVCIGVITGFGLTSYTLAMHALIEHWRNRHD.

Catalysis depends on tyrosine 22, which acts as the Proton acceptor. Asparagine 71, histidine 77, and aspartate 84 together coordinate substrate. Histidine 97 (proton donor) is an active-site residue. Substrate-binding positions include 98–99 (IS) and arginine 108.

Belongs to the type-II 3-dehydroquinase family. Homododecamer.

The catalysed reaction is 3-dehydroquinate = 3-dehydroshikimate + H2O. The protein operates within metabolic intermediate biosynthesis; chorismate biosynthesis; chorismate from D-erythrose 4-phosphate and phosphoenolpyruvate: step 3/7. In terms of biological role, catalyzes a trans-dehydration via an enolate intermediate. The polypeptide is 3-dehydroquinate dehydratase (Exiguobacterium sp. (strain ATCC BAA-1283 / AT1b)).